We begin with the raw amino-acid sequence, 393 residues long: Putative N(4)-(beta-N-acetylglucosaminyl)-L-asparaginase GH22932 (393 aa).

The disordered stretch occupies residues 15–41 (ALKPITNSSSDTITPNPNLITTSRGSS). Residues 19-41 (ITNSSSDTITPNPNLITTSRGSS) show a composition bias toward polar residues. 2 disulfides stabilise this stretch: Cys100–Cys105 and Cys199–Cys215. The Nucleophile role is filled by Thr246. Residues 274–277 (RVGD) and 297–300 (TGDG) each bind substrate. Cysteines 357 and 381 form a disulfide.

It belongs to the Ntn-hydrolase family. In terms of assembly, heterotetramer of two alpha and two beta chains arranged as a dimer of alpha/beta heterodimers. Post-translationally, cleaved into an alpha and beta chain by autocatalysis; this activates the enzyme. The N-terminal residue of the beta subunit is responsible for the nucleophile hydrolase activity.

The catalysed reaction is N(4)-(beta-N-acetyl-D-glucosaminyl)-L-asparagine + H2O = N-acetyl-beta-D-glucosaminylamine + L-aspartate + H(+). Functionally, cleaves the GlcNAc-Asn bond which joins oligosaccharides to the peptide of asparagine-linked glycoproteins. The polypeptide is Putative N(4)-(beta-N-acetylglucosaminyl)-L-asparaginase GH22932 (Drosophila grimshawi (Hawaiian fruit fly)).